The following is a 278-amino-acid chain: Large ribosomal subunit protein uL2 (278 aa).

Composition is skewed to basic residues over residues 210–219 (RKRWLGKRPQ) and 252–263 (KKSRGIKTRNSK). Residues 210-278 (RKRWLGKRPQ…LIIRHRKGNK (69 aa)) form a disordered region.

It belongs to the universal ribosomal protein uL2 family. As to quaternary structure, part of the 50S ribosomal subunit. Forms a bridge to the 30S subunit in the 70S ribosome.

One of the primary rRNA binding proteins. Required for association of the 30S and 50S subunits to form the 70S ribosome, for tRNA binding and peptide bond formation. It has been suggested to have peptidyltransferase activity; this is somewhat controversial. Makes several contacts with the 16S rRNA in the 70S ribosome. The chain is Large ribosomal subunit protein uL2 from Lactobacillus gasseri (strain ATCC 33323 / DSM 20243 / BCRC 14619 / CIP 102991 / JCM 1131 / KCTC 3163 / NCIMB 11718 / NCTC 13722 / AM63).